Consider the following 123-residue polypeptide: Hydrogenase maturation factor HypA (123 aa).

H2 lines the Ni(2+) pocket. Zn(2+) contacts are provided by C77, C80, C96, and C99.

It belongs to the HypA/HybF family.

Involved in the maturation of [NiFe] hydrogenases. Required for nickel insertion into the metal center of the hydrogenase. The sequence is that of Hydrogenase maturation factor HypA from Methanococcus aeolicus (strain ATCC BAA-1280 / DSM 17508 / OCM 812 / Nankai-3).